The following is a 251-amino-acid chain: Small ribosomal subunit protein uS2B (251 aa).

Serine 2 carries the N-acetylserine modification. Over residues 214 to 225 the composition is skewed to low complexity; that stretch reads AVEEASATGATE. The disordered stretch occupies residues 214–251; it reads AVEEASATGATEEATEEATEETTEATEWAEDNTENATW. Positions 226-251 are enriched in acidic residues; it reads EATEEATEETTEATEWAEDNTENATW.

It belongs to the universal ribosomal protein uS2 family. In terms of assembly, component of the small ribosomal subunit. Mature ribosomes consist of a small (40S) and a large (60S) subunit. The 40S subunit contains about 33 different proteins and 1 molecule of RNA (18S). The 60S subunit contains about 49 different proteins and 3 molecules of RNA (25S, 5.8S and 5S). Interacts with RPS21.

Its subcellular location is the cytoplasm. Functionally, required for the assembly and/or stability of the 40S ribosomal subunit. Required for the processing of the 20S rRNA-precursor to mature 18S rRNA in a late step of the maturation of 40S ribosomal subunits. The polypeptide is Small ribosomal subunit protein uS2B (Vanderwaltozyma polyspora (strain ATCC 22028 / DSM 70294 / BCRC 21397 / CBS 2163 / NBRC 10782 / NRRL Y-8283 / UCD 57-17) (Kluyveromyces polysporus)).